A 917-amino-acid polypeptide reads, in one-letter code: Outer membrane protein SlpA (917 aa).

The signal sequence occupies residues methionine 1–alanine 23. The SLH domain occupies glutamine 24 to glutamine 84.

In terms of assembly, homotrimer.

Its subcellular location is the cell outer membrane. In terms of biological role, plays an important role in the structural organization and integrity of the cell envelope, bridging the outer membrane to the peptidoglyan layer. Appears to be a nonselective channel. The sequence is that of Outer membrane protein SlpA (slpA) from Thermus thermophilus (strain ATCC 27634 / DSM 579 / HB8).